The primary structure comprises 432 residues: Adenylosuccinate synthetase (432 aa).

Residues 13–19 (GDEGKGK) and 41–43 (GHT) contribute to the GTP site. The Proton acceptor role is filled by D14. Mg(2+) contacts are provided by D14 and G41. IMP contacts are provided by residues 14 to 17 (DEGK), 39 to 42 (NAGH), T130, R144, Q225, T240, and R304. Residue H42 is the Proton donor of the active site. Position 300 to 306 (300 to 306 (AVTGRPR)) interacts with substrate. Residues R306, 332 to 334 (KLD), and 415 to 417 (STG) contribute to the GTP site.

It belongs to the adenylosuccinate synthetase family. As to quaternary structure, homodimer. Requires Mg(2+) as cofactor.

The protein localises to the cytoplasm. It carries out the reaction IMP + L-aspartate + GTP = N(6)-(1,2-dicarboxyethyl)-AMP + GDP + phosphate + 2 H(+). It participates in purine metabolism; AMP biosynthesis via de novo pathway; AMP from IMP: step 1/2. Functionally, plays an important role in the de novo pathway of purine nucleotide biosynthesis. Catalyzes the first committed step in the biosynthesis of AMP from IMP. This chain is Adenylosuccinate synthetase, found in Actinobacillus pleuropneumoniae serotype 7 (strain AP76).